The sequence spans 728 residues: Methylmalonyl-CoA mutase large subunit (728 aa).

(R)-methylmalonyl-CoA-binding residues include Y75, M78, R82, T85, R87, Y89, and S114. Residues F117 and A139 each contribute to the cob(II)alamin site. (R)-methylmalonyl-CoA is bound by residues T195 and Q197. V206 and R207 together coordinate cob(II)alamin. R207, H244, R283, and S285 together coordinate (R)-methylmalonyl-CoA. Residues G333, E370, A373, G609, H610, D611, R612, S655, L657, G686, and T709 each coordinate cob(II)alamin. In terms of domain architecture, B12-binding spans 597-728 (RPRILLAKMG…VKKLRASLDA (132 aa)).

It belongs to the methylmalonyl-CoA mutase family. Heterodimer of an alpha and a beta chain. It depends on adenosylcob(III)alamin as a cofactor.

The enzyme catalyses (R)-methylmalonyl-CoA = succinyl-CoA. Catalyzes the reversible conversion of succinyl-CoA to (R)-methylmalonyl-CoA through a radical mechanism. Is involved in the fermentation of pyruvate to propanoate that occurs in Propionibacteria. The sequence is that of Methylmalonyl-CoA mutase large subunit (mutB) from Propionibacterium freudenreichii subsp. shermanii.